A 44-amino-acid chain; its full sequence is Mu-conotoxin-like Cal 12.1.3b (44 aa).

Cystine bridges form between cysteine 3-cysteine 16, cysteine 11-cysteine 28, cysteine 18-cysteine 33, and cysteine 27-cysteine 38. The residue at position 23 (proline 23) is a 4-hydroxyproline. Tryptophan 36 and tryptophan 37 each carry 6'-bromotryptophan. 4-hydroxyproline is present on proline 39. The residue at position 43 (tryptophan 43) is a 6'-bromotryptophan.

In terms of tissue distribution, expressed by the venom duct.

The protein resides in the secreted. Its function is as follows. Mu-conotoxins block voltage-gated sodium channels. This toxin reversibly blocks voltage-gated sodium channel in cephalopods, with no alteration in the voltage dependence of sodium conductance or on the kinetics of inactivation. This is Mu-conotoxin-like Cal 12.1.3b from Californiconus californicus (California cone).